We begin with the raw amino-acid sequence, 850 residues long: Protein translocase subunit SecA 2 (850 aa).

ATP contacts are provided by residues Q83, 101-105 (GEGKT), and D491.

Belongs to the SecA family. Monomer and homodimer. Part of the essential Sec protein translocation apparatus which comprises SecA, SecYEG and auxiliary proteins SecDF. Other proteins may also be involved.

The protein localises to the cell membrane. Its subcellular location is the cytoplasm. It catalyses the reaction ATP + H2O + cellular proteinSide 1 = ADP + phosphate + cellular proteinSide 2.. Part of the Sec protein translocase complex. Interacts with the SecYEG preprotein conducting channel. Has a central role in coupling the hydrolysis of ATP to the transfer of proteins into and across the cell membrane, serving as an ATP-driven molecular motor driving the stepwise translocation of polypeptide chains across the membrane. The protein is Protein translocase subunit SecA 2 of Mycolicibacterium vanbaalenii (strain DSM 7251 / JCM 13017 / BCRC 16820 / KCTC 9966 / NRRL B-24157 / PYR-1) (Mycobacterium vanbaalenii).